Reading from the N-terminus, the 885-residue chain is DNA replication licensing factor REC (885 aa).

The disordered stretch occupies residues 36 to 76 (RVIPAGGNRQPNQGEPGAPDAPSVPPATRQPRGWSRTAGKR). Residues 281–308 (CSRCQMEIAMRQRGTFQPRPYQCKRSEC) form a C4-type zinc finger. In terms of domain architecture, MCM spans 430-627 (SFKLLVQSIA…ERDMSLTAHV (198 aa)). 473–480 (GDPGIGKT) contacts ATP. Positions 796–805 (SLKEGSSRQG) are enriched in polar residues. The tract at residues 796 to 818 (SLKEGSSRQGTRGGGGAGGGAGK) is disordered. Gly residues predominate over residues 806–817 (TRGGGGAGGGAG).

Belongs to the MCM family.

It localises to the nucleus. Its function is as follows. Required for meiotic DNA recombination in females. Probably not involved in DNA repair and recombination in somatic cells. In Drosophila melanogaster (Fruit fly), this protein is DNA replication licensing factor REC (rec).